The primary structure comprises 502 residues: mRNA cap guanine-N(7) methyltransferase (502 aa).

A disordered region spans residues 1 to 118; sequence MADENPQAQG…SQQEEAMRFS (118 aa). Over residues 93–115 the composition is skewed to basic and acidic residues; sequence LVDRETLRRRQEERERSQQEEAM. The region spanning 146–502 is the mRNA cap 0 methyltransferase domain; sequence SKIKGLRSFN…FYHAFCFYKV (357 aa). 155 to 156 lines the mRNA pocket; sequence NN. S-adenosyl-L-methionine contacts are provided by residues Lys159, Gly202, Asp226, Asp264, 307–309, and Tyr312; that span reads MFT. Over residues 360 to 369 the composition is skewed to basic and acidic residues; it reads ERETAAKKEE. Residues 360–381 form a disordered region; sequence ERETAAKKEEAEPEDGEVEEDD. Over residues 370–381 the composition is skewed to acidic residues; the sequence is AEPEDGEVEEDD.

It belongs to the class I-like SAM-binding methyltransferase superfamily. mRNA cap 0 methyltransferase family.

Its subcellular location is the nucleus. The enzyme catalyses a 5'-end (5'-triphosphoguanosine)-ribonucleoside in mRNA + S-adenosyl-L-methionine = a 5'-end (N(7)-methyl 5'-triphosphoguanosine)-ribonucleoside in mRNA + S-adenosyl-L-homocysteine. In terms of biological role, responsible for methylating the 5'-cap structure of mRNAs. This is mRNA cap guanine-N(7) methyltransferase (abd1) from Aspergillus oryzae (strain ATCC 42149 / RIB 40) (Yellow koji mold).